The sequence spans 325 residues: Fatty acid synthase alpha subunit hexA (325 aa).

Asp-209 is a binding site for Mg(2+). Acetyl-CoA is bound by residues 209 to 211 (DLV), 255 to 265 (EAVFKCLHTQT), 279 to 282 (KSDN), and 301 to 303 (ISH). Ser-302 serves as a coordination point for Mg(2+).

This sequence belongs to the thiolase-like superfamily. Fungal fatty acid synthetase subunit alpha family. [Alpha(6)beta(6)] hexamers of two multifunctional subunits (alpha and beta). 4'-phosphopantetheine is transferred from CoA to a specific serine of the acyl carrier domain by the C-terminal PPT domain. This modification is essential for activity because fatty acids are bound in thioester linkage to the sulfhydryl of the prosthetic group.

It carries out the reaction acetyl-CoA + n malonyl-CoA + 2n NADPH + 4n H(+) = a long-chain-acyl-CoA + n CoA + n CO2 + 2n NADP(+).. It catalyses the reaction a fatty acyl-[ACP] + malonyl-[ACP] + H(+) = a 3-oxoacyl-[ACP] + holo-[ACP] + CO2. The catalysed reaction is a (3R)-hydroxyacyl-[ACP] + NADP(+) = a 3-oxoacyl-[ACP] + NADPH + H(+). It participates in mycotoxin biosynthesis. Functionally, fatty acid synthase alpha subunit; part of the fragmented gene cluster that mediates the biosynthesis of dothistromin (DOTH), a polyketide toxin very similar in structure to the aflatoxin precursor, versicolorin B. The first step of the pathway is the conversion of acetate to norsolorinic acid (NOR) and requires the fatty acid synthase subunits hexA and hexB, as well as the polyketide synthase pksA. PksA combines a hexanoyl starter unit and 7 malonyl-CoA extender units to synthesize the precursor NOR. The hexanoyl starter unit is provided to the acyl-carrier protein (ACP) domain by the fungal fatty acid synthase hexA/hexB. The second step is the conversion of NOR to averantin (AVN) and requires the norsolorinic acid ketoreductase nor1, which catalyzes the dehydration of norsolorinic acid to form (1'S)-averantin. The cytochrome P450 monooxygenase avnA then catalyzes the hydroxylation of AVN to 5'hydroxyaverantin (HAVN). The next step is performed by adhA that transforms HAVN to averufin (AVF). Averufin might then be converted to hydroxyversicolorone by cypX and avfA. Hydroxyversicolorone is further converted versiconal hemiacetal acetate (VHA) by moxY. VHA is then the substrate for the versiconal hemiacetal acetate esterase est1 to yield versiconal (VAL). Versicolorin B synthase vbsA then converts VAL to versicolorin B (VERB) by closing the bisfuran ring. Then, the activity of the versicolorin B desaturase verB leads to versicolorin A (VERA). DotB, a predicted chloroperoxidase, may perform epoxidation of the A-ring of VERA. Alternatively, a cytochrome P450, such as cypX or avnA could catalyze this step. It is also possible that another, uncharacterized, cytochrome P450 enzyme is responsible for this step. Opening of the epoxide could potentially be achieved by the epoxide hydrolase epoA. However, epoA seems not to be required for DOTH biosynthesis, but other epoxide hydrolases may have the ability to complement this hydrolysis. Alternatively, opening of the epoxide ring could be achieved non-enzymatically. The next step is the deoxygenation of ring A to yield the 5,8-dihydroxyanthraquinone which is most likely catalyzed by the NADPH dehydrogenase encoded by ver1. The last stages of DOTH biosynthesis are proposed to involve hydroxylation of the bisfuran. OrdB and norB might have oxidative roles here. An alternative possibility is that cytochrome P450 monoogenases such as avnA and cypX might perform these steps in addition to previously proposed steps. This Dothistroma septosporum (Red band needle blight fungus) protein is Fatty acid synthase alpha subunit hexA.